Here is a 322-residue protein sequence, read N- to C-terminus: XXXXXXXXXXXDGHCIPALGFGTYKPIEVPKSKAMEAANLAIGVGYRHIDTAYAYQIEEEIGQAIQSNIKAGIVKREDMFITTKLWCTCFQPELVRPSLEKXXXKLQLEHVDLFIMHYPVPMKAGDNDFPLDEQGKLLLDTVDFCATWEALEKXXDAGLVKSIGVSNFNMRQLERILNKPGLKYKPVCNQVECHVYNNQSKLLDYCKSKDIVLVAFGALGTQRYKEWVDQDSPVLLNDPVLCGGAKXXXRSPALIALRYLVQRGVVPLAQSFYESEMKENLQVFEFQLSPEDMKILDGLNKNFRYLPAQFFADHPEYPFSEE.

NAD(+) contacts are provided by residues 20-24 (GFGTY) and D50. Y55 functions as the Proton donor in the catalytic mechanism. Residue H117 participates in substrate binding. NAD(+) contacts are provided by residues 166-167 (SN), Q190, 216-224 (FGALGTQRY), and 270-280 (QSFYESEMKEN).

Belongs to the aldo/keto reductase family. Monomer. The N-terminus is blocked.

It carries out the reaction morphine + NAD(+) = morphinone + NADH + H(+). It catalyses the reaction morphine + NADP(+) = morphinone + NADPH + H(+). With respect to regulation, strongly inhibited by sulfhydryl reagents and ketamine, but not by pyrazole, barbital and indomethacine. Its function is as follows. Catalyzes the dehydrogenation of morphine to morphinone. The enzyme also exhibits significant activity for a variety of cyclic and alicyclic alcohols. In addition to xenobiotics, the enzyme catalyzes the dehydrogenation of 17-beta-hydroxysteroids with much higher affinities than morphine. Uses both NAD and NADP, but the activity is much greater with NAD than with NADP. The polypeptide is Aldo-keto reductase family 1 member C13 (AKR1C13) (Mesocricetus auratus (Golden hamster)).